Here is a 212-residue protein sequence, read N- to C-terminus: uncharacterized protein (212 aa).

The Acyl-thioester intermediate role is filled by Cys52. Active-site residues include His89 and Asp104.

Belongs to the arylamine N-acetyltransferase family.

This is an uncharacterized protein from Acanthamoeba polyphaga (Amoeba).